Reading from the N-terminus, the 791-residue chain is Nuclear cap-binding protein subunit 1-B (791 aa).

Residues 1–24 (MSRRRHSDENDGGQPHKRRRTSEP) are disordered. Residues 28–240 (EDRLESLICR…CLWAQVQKLK (213 aa)) enclose the MIF4G domain. A coiled-coil region spans residues 641-714 (LHSTIRKMNK…SEQKNLFLVI (74 aa)). A disordered region spans residues 664–687 (QRLAKQHKHRDSDDNDEDSGRKDG).

Belongs to the NCBP1 family. As to quaternary structure, component of the nuclear cap-binding complex (CBC), a heterodimer composed of ncbp1/cbp80 and ncbp2/cbp20 that interacts with m7GpppG-capped RNA. Component of an alternative nuclear cap-binding complex (CBC) composed of ncbp1/cbp80 and ncbp3.

Its subcellular location is the nucleus. The protein localises to the cytoplasm. Functionally, component of the cap-binding complex (CBC), which binds cotranscriptionally to the 5'-cap of pre-mRNAs and is involved in various processes such as pre-mRNA splicing, translation regulation, nonsense-mediated mRNA decay, RNA-mediated gene silencing (RNAi) by microRNAs (miRNAs) and mRNA export. The CBC complex is involved in mRNA export from the nucleus, leading to the recruitment of the mRNA export machinery to the 5'-end of mRNA and to mRNA export in a 5' to 3' direction through the nuclear pore. The CBC complex is also involved in mediating U snRNA and intronless mRNAs export from the nucleus. The CBC complex is essential for a pioneer round of mRNA translation, before steady state translation when the CBC complex is replaced by cytoplasmic cap-binding protein eIF4E. The pioneer round of mRNA translation mediated by the CBC complex plays a central role in nonsense-mediated mRNA decay (NMD), NMD only taking place in mRNAs bound to the CBC complex, but not on eIF4E-bound mRNAs. The CBC complex enhances NMD in mRNAs containing at least one exon-junction complex (EJC), promoting the interaction between UPF1 and UPF2. The CBC complex is also involved in 'failsafe' NMD, which is independent of the EJC complex, while it does not participate in Staufen-mediated mRNA decay (SMD). During cell proliferation, the CBC complex is also involved in microRNAs (miRNAs) biogenesis via its interaction with SRRT/ARS2 and is required for miRNA-mediated RNA interference. The CBC complex also acts as a negative regulator of parn, thereby acting as an inhibitor of mRNA deadenylation. In the CBC complex, NCBP1/CBP80 does not bind directly capped RNAs (m7GpppG-capped RNA) but is required to stabilize the movement of the N-terminal loop of NCBP2/CBP20 and lock the CBC into a high affinity cap-binding state with the cap structure. Associates with NCBP3 to form an alternative cap-binding complex (CBC) which plays a key role in mRNA export. The conventional CBC with NCBP2 binds both small nuclear RNA (snRNA) and messenger (mRNA) and is involved in their export from the nucleus whereas the alternative CBC with NCBP3 does not bind snRNA and associates only with mRNA thereby playing a role only in mRNA export. The chain is Nuclear cap-binding protein subunit 1-B (ncbp1-b) from Xenopus laevis (African clawed frog).